Here is a 282-residue protein sequence, read N- to C-terminus: Plant cysteine oxidase 3 (282 aa).

Fe cation contacts are provided by His131, His133, and His202.

It belongs to the cysteine dioxygenase family. Requires Fe(2+) as cofactor.

The protein resides in the nucleus. The protein localises to the cytoplasm. The enzyme catalyses L-cysteine + O2 = 3-sulfino-L-alanine + H(+). Catalyzes the oxidation of N-terminal cysteine residues (N-Cys), thus preparing the protein for N-end rule pathway-mediated proteasomal degradation, upstream of the N-end rule enzymes ATE1, ATE2 and PRT6. Controls the preparation of the group VII ethylene response factor (ERF-VII) proteins for degradation via the 26S proteasome N-end rule pathway. Acts as an oxygen sensor that controls the stability of ERF-VII proteins, which are stabilized in flooding-induced hypoxia, and regulate transcriptional adaptation to these adverse conditions. This Arabidopsis thaliana (Mouse-ear cress) protein is Plant cysteine oxidase 3.